A 127-amino-acid chain; its full sequence is Large ribosomal subunit protein bL12 (127 aa).

This sequence belongs to the bacterial ribosomal protein bL12 family. Homodimer. Part of the ribosomal stalk of the 50S ribosomal subunit. Forms a multimeric L10(L12)X complex, where L10 forms an elongated spine to which 2 to 4 L12 dimers bind in a sequential fashion. Binds GTP-bound translation factors.

Its function is as follows. Forms part of the ribosomal stalk which helps the ribosome interact with GTP-bound translation factors. Is thus essential for accurate translation. This is Large ribosomal subunit protein bL12 from Rhizobium etli (strain ATCC 51251 / DSM 11541 / JCM 21823 / NBRC 15573 / CFN 42).